The following is a 121-amino-acid chain: Large ribosomal subunit protein mL52 (121 aa).

A mitochondrion-targeting transit peptide spans Met1–Ala22. Positions Gln98–Pro109 are enriched in basic and acidic residues. Residues Gln98–Gln121 form a disordered region.

This sequence belongs to the mitochondrion-specific ribosomal protein mL52 family. Component of the mitochondrial ribosome large subunit (39S) which comprises a 16S rRNA and about 50 distinct proteins.

The protein resides in the mitochondrion. The protein is Large ribosomal subunit protein mL52 (Mrpl52) of Mus musculus (Mouse).